The chain runs to 1621 residues: Lysophospholipase NTE1 (1621 aa).

Over M1–G12 the chain is Cytoplasmic. The helical transmembrane segment at N13–V33 threads the bilayer. Residues K34–S59 lie on the Lumenal side of the membrane. Residues L60–I80 form a helical membrane-spanning segment. Residues R81–I1621 lie on the Cytoplasmic side of the membrane. Disordered regions lie at residues P188–S209, E250–R379, Q545–T566, W648–D667, V711–R735, D772–G791, and F839–F870. Low complexity-rich tracts occupy residues T195–S209 and R348–S361. A nucleoside 3',5'-cyclic phosphate-binding positions include G788–S907 and R951–R1070. The segment covering F839–E867 has biased composition (polar residues). Positions L1316–R1480 constitute a PNPLA domain. Positions G1320–G1325 match the GXGXXG motif. The short motif at G1347–G1351 is the GXSXG element. S1349 serves as the catalytic Nucleophile. D1467 serves as the catalytic Proton acceptor. Positions D1467–G1469 match the DGA/G motif.

Belongs to the NTE family.

The protein resides in the endoplasmic reticulum membrane. The catalysed reaction is a 1-acyl-sn-glycero-3-phosphocholine + H2O = sn-glycerol 3-phosphocholine + a fatty acid + H(+). Its activity is regulated as follows. Inhibited by organophosphorus esters. Its function is as follows. Intracellular phospholipase B that catalyzes the double deacylation of phosphatidylcholine (PC) to glycerophosphocholine (GroPCho). Plays an important role in membrane lipid homeostasis. Responsible for the rapid PC turnover in response to inositol, elevated temperatures, or when choline is present in the growth medium. The sequence is that of Lysophospholipase NTE1 (NTE1) from Cryptococcus neoformans var. neoformans serotype D (strain B-3501A) (Filobasidiella neoformans).